A 109-amino-acid chain; its full sequence is MAGALVRKAADYVRSKDFRDYLMSTHFWGPVANWGLPIAAINDMKKSPEIISGRMTFALCCYSLTFMRFAYKVQPRNWLLFACHATNEVAQLIQGGRLIKHEMTKTASA.

Residue Ala2 is modified to N-acetylalanine. Over 2-20 (AGALVRKAADYVRSKDFRD) the chain is Mitochondrial matrix. A helical membrane pass occupies residues 21-41 (YLMSTHFWGPVANWGLPIAAI). Residues 42–52 (NDMKKSPEIIS) lie on the Mitochondrial intermembrane side of the membrane. A helical membrane pass occupies residues 53-71 (GRMTFALCCYSLTFMRFAY). An N6-acetyllysine modification is found at Lys72. At 72-109 (KVQPRNWLLFACHATNEVAQLIQGGRLIKHEMTKTASA) the chain is on the mitochondrial matrix side.

It belongs to the mitochondrial pyruvate carrier (MPC) (TC 2.A.105) family. As to quaternary structure, homodimer. Forms heterodimer with MPC2. The heterodimer is the more stable and dominant form.

It is found in the mitochondrion inner membrane. The catalysed reaction is pyruvate(out) + H(+)(out) = pyruvate(in) + H(+)(in). Mediates the uptake of pyruvate into mitochondria. The protein is Mitochondrial pyruvate carrier 1 (MPC1) of Homo sapiens (Human).